We begin with the raw amino-acid sequence, 329 residues long: DNA-directed RNA polymerase subunit alpha (329 aa).

An alpha N-terminal domain (alpha-NTD) region spans residues 1-235 (MQGSVTEFLK…EQLDAFVDLR (235 aa)). The segment at 249 to 329 (FDPILLRPVD…NWPPASIAED (81 aa)) is alpha C-terminal domain (alpha-CTD).

The protein belongs to the RNA polymerase alpha chain family. In terms of assembly, homodimer. The RNAP catalytic core consists of 2 alpha, 1 beta, 1 beta' and 1 omega subunit. When a sigma factor is associated with the core the holoenzyme is formed, which can initiate transcription.

It catalyses the reaction RNA(n) + a ribonucleoside 5'-triphosphate = RNA(n+1) + diphosphate. Functionally, DNA-dependent RNA polymerase catalyzes the transcription of DNA into RNA using the four ribonucleoside triphosphates as substrates. The protein is DNA-directed RNA polymerase subunit alpha of Mannheimia succiniciproducens (strain KCTC 0769BP / MBEL55E).